The sequence spans 242 residues: Ras-like protein family member 11A (242 aa).

The interval E17 to L241 is small GTPase-like. Residues G34–S41, D81–A88, and N147–D150 each bind GTP.

It belongs to the small GTPase superfamily. Ras family. Interacts with UBF/UBTF.

It is found in the nucleus. It localises to the nucleolus. The enzyme catalyses GTP + H2O = GDP + phosphate + H(+). Functionally, regulator of rDNA transcription. Acts in cooperation UBF/UBTF and positively regulates RNA polymerase I transcription. This Mus musculus (Mouse) protein is Ras-like protein family member 11A.